Here is a 454-residue protein sequence, read N- to C-terminus: tRNA modification GTPase MnmE (454 aa).

Residues Arg-23, Glu-80, and Lys-120 each contribute to the (6S)-5-formyl-5,6,7,8-tetrahydrofolate site. The region spanning 216–377 is the TrmE-type G domain; it reads GMKVVIAGRP…LRDHLKSSMG (162 aa). A K(+)-binding site is contributed by Asn-226. GTP-binding positions include 226–231, 245–251, 270–273, 335–338, and 358–360; these read NAGKSS, TDIAGTT, DTAG, NKAD, and SAR. Ser-230 serves as a coordination point for Mg(2+). Residues Thr-245, Ile-247, and Thr-250 each coordinate K(+). Thr-251 contributes to the Mg(2+) binding site. Residue Lys-454 participates in (6S)-5-formyl-5,6,7,8-tetrahydrofolate binding.

The protein belongs to the TRAFAC class TrmE-Era-EngA-EngB-Septin-like GTPase superfamily. TrmE GTPase family. As to quaternary structure, homodimer. Heterotetramer of two MnmE and two MnmG subunits. K(+) serves as cofactor.

Its subcellular location is the cytoplasm. Functionally, exhibits a very high intrinsic GTPase hydrolysis rate. Involved in the addition of a carboxymethylaminomethyl (cmnm) group at the wobble position (U34) of certain tRNAs, forming tRNA-cmnm(5)s(2)U34. The chain is tRNA modification GTPase MnmE from Erwinia tasmaniensis (strain DSM 17950 / CFBP 7177 / CIP 109463 / NCPPB 4357 / Et1/99).